Reading from the N-terminus, the 100-residue chain is Ribosomal biogenesis factor (100 aa).

Ser19 carries the phosphoserine modification. Residue Lys21 is modified to N6-acetyllysine. At Ser69 the chain carries Phosphoserine.

In terms of assembly, associates with the pre-60S ribosomal particles.

It localises to the nucleus. The protein resides in the nucleolus. Trans-acting factor in ribosome biogenesis required for efficient 40S and 60S subunit production. This is Ribosomal biogenesis factor (RBIS) from Bos taurus (Bovine).